Consider the following 147-residue polypeptide: C-glycoside deglycosidase beta subunit (147 aa).

Belongs to the C-glycoside deglycosidase beta subunit family. As to quaternary structure, heterooctamer composed of four alpha subunits (DfgA) and four beta subunits (DfgB). Mn(2+) serves as cofactor.

It carries out the reaction 3''-dehydroisoorientin = 1,5-anhydro-D-erythro-hex-1-en-3-ulose + luteolin. The catalysed reaction is 3''-dehydroisovitexin = 1,5-anhydro-D-erythro-hex-1-en-3-ulose + apigenin. With respect to regulation, activity is strongly reduced in the presence of chelating agents. Functionally, carbon-carbon bond-cleaving enzyme which participates in the metabolism of C-glycosides. Acts on the C6-glycosylated compounds 3''-dehydroisoorientin (3''-oxo-homoorientin) and 3''-dehydroisovitexin (3''-oxo-isovitexin). The polypeptide is C-glycoside deglycosidase beta subunit (Eubacterium cellulosolvens (strain ATCC 43171 / JCM 9499 / 6) (Cillobacterium cellulosolvens)).